A 413-amino-acid polypeptide reads, in one-letter code: Probable short/branched chain specific acyl-CoA dehydrogenase (413 aa).

FAD-binding positions include 152–161 and 186–188; these read FCLSESGSGS and WIT. S161 provides a ligand contact to substrate. Substrate is bound by residues Y208, Y262, and 270-273; that span reads NEGR. Residues R298, Q309, and 366 to 370 contribute to the FAD site; that span reads SMLGG. Catalysis depends on E393, which acts as the Proton acceptor. Residue 395–397 coordinates FAD; the sequence is TSN.

This sequence belongs to the acyl-CoA dehydrogenase family. As to quaternary structure, homotetramer. FAD is required as a cofactor.

The enzyme catalyses 2-methylbutanoyl-CoA + oxidized [electron-transfer flavoprotein] + H(+) = (2E)-2-methylbut-2-enoyl-CoA + reduced [electron-transfer flavoprotein]. It functions in the pathway lipid metabolism; mitochondrial fatty acid beta-oxidation. The protein operates within amino-acid degradation; L-isoleucine degradation. In terms of biological role, probable short and branched chain specific acyl-CoA dehydrogenase that catalyzes the removal of one hydrogen from C-2 and C-3 of the fatty acyl-CoA thioester, resulting in the formation of trans-2-enoyl-CoA. This is Probable short/branched chain specific acyl-CoA dehydrogenase (acadsb) from Dictyostelium discoideum (Social amoeba).